The following is a 709-amino-acid chain: Elongation factor G (709 aa).

In terms of domain architecture, tr-type G spans 8 to 290; it reads NRYRNIGISA…AVIQYMPAPQ (283 aa). GTP contacts are provided by residues 17 to 24, 88 to 92, and 142 to 145; these read AHIDAGKT, DTPGH, and NKMD.

Belongs to the TRAFAC class translation factor GTPase superfamily. Classic translation factor GTPase family. EF-G/EF-2 subfamily.

Its subcellular location is the cytoplasm. In terms of biological role, catalyzes the GTP-dependent ribosomal translocation step during translation elongation. During this step, the ribosome changes from the pre-translocational (PRE) to the post-translocational (POST) state as the newly formed A-site-bound peptidyl-tRNA and P-site-bound deacylated tRNA move to the P and E sites, respectively. Catalyzes the coordinated movement of the two tRNA molecules, the mRNA and conformational changes in the ribosome. This Psychrobacter sp. (strain PRwf-1) protein is Elongation factor G.